A 426-amino-acid polypeptide reads, in one-letter code: Serine--tRNA ligase (426 aa).

An L-serine-binding site is contributed by 232 to 234; that stretch reads TAE. Residue 263–265 coordinates ATP; sequence RSE. Position 286 (glutamate 286) interacts with L-serine. 350–353 is a binding site for ATP; that stretch reads EISS. Residue serine 385 coordinates L-serine.

Belongs to the class-II aminoacyl-tRNA synthetase family. Type-1 seryl-tRNA synthetase subfamily. As to quaternary structure, homodimer. The tRNA molecule binds across the dimer.

Its subcellular location is the cytoplasm. The catalysed reaction is tRNA(Ser) + L-serine + ATP = L-seryl-tRNA(Ser) + AMP + diphosphate + H(+). It catalyses the reaction tRNA(Sec) + L-serine + ATP = L-seryl-tRNA(Sec) + AMP + diphosphate + H(+). It participates in aminoacyl-tRNA biosynthesis; selenocysteinyl-tRNA(Sec) biosynthesis; L-seryl-tRNA(Sec) from L-serine and tRNA(Sec): step 1/1. Its function is as follows. Catalyzes the attachment of serine to tRNA(Ser). Is also able to aminoacylate tRNA(Sec) with serine, to form the misacylated tRNA L-seryl-tRNA(Sec), which will be further converted into selenocysteinyl-tRNA(Sec). The protein is Serine--tRNA ligase of Pediococcus pentosaceus (strain ATCC 25745 / CCUG 21536 / LMG 10740 / 183-1w).